The following is a 338-amino-acid chain: UDP-N-acetylglucosamine--N-acetylmuramyl-(pentapeptide) pyrophosphoryl-undecaprenol N-acetylglucosamine transferase (338 aa).

Residues 10-12 (TGG), Asn122, Ser177, and Gln275 each bind UDP-N-acetyl-alpha-D-glucosamine.

The protein belongs to the glycosyltransferase 28 family. MurG subfamily.

It is found in the cell inner membrane. It catalyses the reaction di-trans,octa-cis-undecaprenyl diphospho-N-acetyl-alpha-D-muramoyl-L-alanyl-D-glutamyl-meso-2,6-diaminopimeloyl-D-alanyl-D-alanine + UDP-N-acetyl-alpha-D-glucosamine = di-trans,octa-cis-undecaprenyl diphospho-[N-acetyl-alpha-D-glucosaminyl-(1-&gt;4)]-N-acetyl-alpha-D-muramoyl-L-alanyl-D-glutamyl-meso-2,6-diaminopimeloyl-D-alanyl-D-alanine + UDP + H(+). It functions in the pathway cell wall biogenesis; peptidoglycan biosynthesis. Cell wall formation. Catalyzes the transfer of a GlcNAc subunit on undecaprenyl-pyrophosphoryl-MurNAc-pentapeptide (lipid intermediate I) to form undecaprenyl-pyrophosphoryl-MurNAc-(pentapeptide)GlcNAc (lipid intermediate II). The polypeptide is UDP-N-acetylglucosamine--N-acetylmuramyl-(pentapeptide) pyrophosphoryl-undecaprenol N-acetylglucosamine transferase (Sulfurovum sp. (strain NBC37-1)).